A 759-amino-acid polypeptide reads, in one-letter code: MAWSQVEISKPHLAYAIIGGFTSLFMLCSLIIKEKLFLGEATMATATGLIFGPYVAKLFVPTSWGNTDYITEELARVLLVVEVFAAGAELPRAYMLRHWRSMFVMLLPVMIFGWLVSTGFMYALIPRLSFLESLAIAACITATDPVLASSIVGKGKFARRVPGHLRNMLLAESGCNDGMAIPFLYLAIYLIIEKPARHAGRDWVCIIILYECTFGCVLGAIIGVIARKMIKFSERRGLMDRESFLVFYFVLALFCGGIGTIIGVDDLLVSFCAGAAFSWDSWFSKKTEESHVSNVIDLLLNLSFFVYVGAIMPWPQFHMPHMDLSVWRLVVLAICILIARRIPAVLLFKSFVPDIINWREALFAGHFGPIGVGALYTCLVARAELEVHSTVPEPNDAIENPEIPNWYCIQVMWPVVCFLVLSSIIVHGSSIAFFMLGKRINTLALSFTRTRDSHFAFNLPRVRQGQSLPIKRVDALRSSANSIASSIRRRHPVNIQEDEDADISTVSLPEAAHLREERAESPRGGHYDAEEFPSEDYESRQPRRSNEEDREEEMNPGDETYLIGEDLVVEDSQGNIISHTSSRDANGPSIDEKLAQGDPKAKSFGRKFRSFLRRSYDTFQRNLHEPDDERQREPTLGHIESSIENHRPRYSRQNSESHLRENSVERRRREQVLTNIGDSESEDDNIPRPGIVPFYNENNESSSDTRNGLLSDNVSESRSRRPSRAPSAAVSSEGSPVEEDNEAQHRPNIRFLELTRAWE.

The next 11 membrane-spanning stretches (helical) occupy residues 12–32 (HLAY…SLII), 36–56 (LFLG…PYVA), 105–125 (MLLP…YALI), 133–153 (SLAI…SIVG), 172–192 (ESGC…YLII), 206–226 (IIIL…GVIA), 244–264 (FLVF…IIGV), 295–315 (VIDL…MPWP), 319–339 (MPHM…ILIA), 361–381 (ALFA…CLVA), and 415–435 (VVCF…AFFM). A Phosphothreonine modification is found at T442. The residue at position 446 (S446) is a Phosphoserine. T448 is subject to Phosphothreonine. 5 stretches are compositionally biased toward basic and acidic residues: residues 514-529 (LREE…HYDA), 537-547 (YESRQPRRSNE), 590-601 (IDEKLAQGDPKA), 622-647 (NLHE…ENHR), and 655-671 (SESH…RREQ). Disordered stretches follow at residues 514 to 558 (LREE…NPGD), 578 to 606 (SHTS…SFGR), and 622 to 759 (NLHE…RAWE). Residues 696-713 (NENNESSSDTRNGLLSDN) show a composition bias toward polar residues. N699 and N713 each carry an N-linked (GlcNAc...) asparagine glycan. Residues 724–733 (RAPSAAVSSE) are compositionally biased toward low complexity. S735 carries the post-translational modification Phosphoserine.

It belongs to the fungal Na(+)/H(+) exchanger family.

The protein localises to the membrane. Sodium export from cell, takes up external protons in exchange for internal sodium ions. The protein is Probable Na(+)/H(+) antiporter C3A11.09 (sod22) of Schizosaccharomyces pombe (strain 972 / ATCC 24843) (Fission yeast).